The sequence spans 362 residues: Protein RecA (362 aa).

Position 77-84 (77-84 (GPESSGKT)) interacts with ATP.

The protein belongs to the RecA family.

It localises to the cytoplasm. Functionally, can catalyze the hydrolysis of ATP in the presence of single-stranded DNA, the ATP-dependent uptake of single-stranded DNA by duplex DNA, and the ATP-dependent hybridization of homologous single-stranded DNAs. It interacts with LexA causing its activation and leading to its autocatalytic cleavage. The polypeptide is Protein RecA (Nitrobacter winogradskyi (strain ATCC 25391 / DSM 10237 / CIP 104748 / NCIMB 11846 / Nb-255)).